Reading from the N-terminus, the 88-residue chain is UPF0297 protein GK2555 (88 aa).

It belongs to the UPF0297 family.

This Geobacillus kaustophilus (strain HTA426) protein is UPF0297 protein GK2555.